A 102-amino-acid polypeptide reads, in one-letter code: Thioredoxin (102 aa).

One can recognise a Thioredoxin domain in the interval 2–102; it reads VTEIKSLKQL…KAKIVQLVSQ (101 aa). Cysteine 30 and cysteine 33 are oxidised to a cystine.

Belongs to the thioredoxin family.

Participates in various redox reactions through the reversible oxidation of its active center dithiol to a disulfide and catalyzes dithiol-disulfide exchange reactions. In Mycoplasma pneumoniae (strain ATCC 29342 / M129 / Subtype 1) (Mycoplasmoides pneumoniae), this protein is Thioredoxin (trxA).